The primary structure comprises 453 residues: tRNA-2-methylthio-N(6)-dimethylallyladenosine synthase (453 aa).

The MTTase N-terminal domain maps to 4 to 118; sequence KKFYIENYGC…IPNLINNFFK (115 aa). [4Fe-4S] cluster is bound by residues C13, C49, C83, C156, C160, and C163. The Radical SAM core domain maps to 142–388; sequence EEKKITAFVT…NLQKTHSYYR (247 aa). A TRAM domain is found at 390–453; the sequence is RKYIGSIQDI…SATLVGDIYV (64 aa).

This sequence belongs to the methylthiotransferase family. MiaB subfamily. Monomer. Requires [4Fe-4S] cluster as cofactor.

The protein resides in the cytoplasm. The enzyme catalyses N(6)-dimethylallyladenosine(37) in tRNA + (sulfur carrier)-SH + AH2 + 2 S-adenosyl-L-methionine = 2-methylsulfanyl-N(6)-dimethylallyladenosine(37) in tRNA + (sulfur carrier)-H + 5'-deoxyadenosine + L-methionine + A + S-adenosyl-L-homocysteine + 2 H(+). Functionally, catalyzes the methylthiolation of N6-(dimethylallyl)adenosine (i(6)A), leading to the formation of 2-methylthio-N6-(dimethylallyl)adenosine (ms(2)i(6)A) at position 37 in tRNAs that read codons beginning with uridine. This is tRNA-2-methylthio-N(6)-dimethylallyladenosine synthase from Karelsulcia muelleri (strain GWSS) (Sulcia muelleri).